The primary structure comprises 455 residues: Putative non-structural protein (455 aa).

Positions 262-276 are enriched in basic and acidic residues; that stretch reads KERKTTHKTLVEDTH. The disordered stretch occupies residues 262–341; sequence KERKTTHKTL…GVLTKKKSLK (80 aa).

The chain is Putative non-structural protein from Bombyx mori (Silk moth).